Here is a 3341-residue protein sequence, read N- to C-terminus: Genome polyprotein (3341 aa).

2 stretches are compositionally biased toward basic and acidic residues: residues 1 to 14 (MKRKDLEARGKAPG) and 24 to 35 (REGRRKDKDKGG). Residues 1–57 (MKRKDLEARGKAPGRDSSTPFWGREGRRKDKDKGGESPSNRQVTLKTPIQSGRRAGK) are disordered. Topologically, residues 1 to 120 (MKRKDLEARG…LESRRTTGNP (120 aa)) are cytoplasmic. Positions 37–50 (SPSNRQVTLKTPIQ) are enriched in polar residues. The tract at residues 55–97 (AGKRQRVGLLGRLGVGWGSFLQEDIVQALIHMALVLHALFASI) is hydrophobic; homodimerization of capsid protein C. Residues 117–136 (TGNPMTLAFILGFLTVLCGC) constitute a propeptide, ER anchor for the capsid protein C, removed in mature form by serine protease NS3. The helical transmembrane segment at 121 to 141 (MTLAFILGFLTVLCGCVVIDM) threads the bilayer. The Extracellular segment spans residues 142–245 (QVSTTRGTEI…AFKTIRENKT (104 aa)). 2 N-linked (GlcNAc...) asparagine; by host glycosylation sites follow: Asn-157 and Asn-243. Residues 246–262 (IFIVALLCVAIAKRWPT) traverse the membrane as a helical segment. Residue Trp-263 is a topological domain, cytoplasmic. A helical transmembrane segment spans residues 264–278 (VVILLAIGTWTTVKG). Residues 279 to 665 (EFVEPLYTLK…GVWQDLVGKF (387 aa)) lie on the Extracellular side of the membrane. A glycan (N-linked (GlcNAc...) asparagine; by host) is linked at Asn-339. An involved in fusion region spans residues 371–384 (NRGWGTGCFKWGIG). 4 N-linked (GlcNAc...) asparagine; by host glycosylation sites follow: Asn-399, Asn-411, Asn-575, and Asn-611. The chain crosses the membrane as a helical span at residues 666–686 (SVGAFFSNTALLVILVLAALI). Residues 687-689 (DKR) are Cytoplasmic-facing. Residues 690-705 (IAFLLVLGGYFYYVRA) traverse the membrane as a helical segment. Residues 706–1138 (DLGCGIDTTR…AKTRTSTLTR (433 aa)) are Extracellular-facing. Asn-794, Asn-896, Asn-993, and Asn-1027 each carry an N-linked (GlcNAc...) asparagine; by host glycan. A helical transmembrane segment spans residues 1139 to 1159 (LFLTILAMALFGLPNLFSSVG). The Cytoplasmic portion of the chain corresponds to 1160 to 1178 (LSAWVLLVASSSAQPQDLS). The chain crosses the membrane as a helical span at residues 1179–1199 (MNLWIVLQTGSSAVLLLGYMI). Topologically, residues 1200–1204 (RRKLA) are lumenal. Residues 1205-1225 (MVLGVHHLVTLMCVQFLFSAV) traverse the membrane as a helical segment. At 1226-1231 (DRYQKY) the chain is on the cytoplasmic side. A helical membrane pass occupies residues 1232 to 1252 (LYGLLELMASVVLLSAYKSVL). At 1253–1261 (QALPPEVLC) the chain is on the lumenal side. A helical transmembrane segment spans residues 1262 to 1282 (FSLVMGWKTALSLATVVFLIF). Over 1283–1303 (SLNAMYKYACQYHNPRNGYRD) the chain is Cytoplasmic. A helical membrane pass occupies residues 1304-1324 (SGANLWFWTVSLASAGGIWAA). Residues 1325–1326 (EK) lie on the Lumenal side of the membrane. The chain crosses the membrane as a helical span at residues 1327–1347 (AHQPTVAAVLAFTMVVLFLYM). The Cytoplasmic portion of the chain corresponds to 1348–1403 (EQTNVSMELEFISAGETPEGVSTENDDGINIPDLKGRYGEDGIVVGAASSSGYLPE). Residues 1404-1424 (LVFVFLLGFAVTSTSYFLGAL) constitute an intramembrane region (helical). Topologically, residues 1425–2089 (YLLIATSTNL…TERSLTVVMA (665 aa)) are cytoplasmic. In terms of domain architecture, Peptidase S7 spans 1452–1630 (SDDLLGLGGP…KPTDVTESLN (179 aa)). Catalysis depends on charge relay system; for serine protease NS3 activity residues His-1506, Asp-1530, and Ser-1589. Positions 1627–1780 (ESLNCDSTRR…SNYAISDQSI (154 aa)) constitute a Helicase ATP-binding domain. 1640–1647 (WHPGKGKT) lines the ATP pocket. Residues 1729–1732 (DECH) carry the DECH box motif. Residues 1793-1947 (NVQKSVGAKK…TFMLEEAAYS (155 aa)) form the Helicase C-terminal domain. A helical membrane pass occupies residues 2090–2110 (FVLGVSIMLSCFIAVWALCFL). At 2111–2145 (FSLFRPKKATYEQMPSSDPLSGGVLVSTPSVLYCM) the chain is on the lumenal side. A helical transmembrane segment spans residues 2146–2166 (GVPLGFCVVITLAMFLVYPVL). Residues 2167–2178 (YKSIGNRSYMDS) lie on the Cytoplasmic side of the membrane. Residues 2179–2199 (DLVKWVILGSCLICGVLAWEM) form a helical membrane-spanning segment. Topologically, residues 2200 to 2242 (RMFPNIRSDLMELVKAVKEPEEVVNSGPSFPSWEIAQGKGATM) are lumenal. A helical transmembrane segment spans residues 2243 to 2263 (LDSLQVFFFITVLSTKFLYWF). Over 2264–2302 (QENWTARMYAMKHPEMVSSIGGFRFDEIPFRAVLPSGFA) the chain is Cytoplasmic. Positions 2303 to 2323 (IVAIASLPSVVVGLLAAGVFM) form an intramembrane region, helical. Topologically, residues 2324-2366 (AIMYCQNKWNATPKILTALDARDQRHDRPTEITSRVPLENTRS) are cytoplasmic. A helical transmembrane segment spans residues 2367 to 2387 (IMYAFCLIFSLFWAFCTRSPG). Topologically, residues 2388–2412 (DFLRGSLVVGASMWQILHPRSKIHD) are lumenal. Residues 2413–2433 (VMDFGSMVSAIGLLEMNYLFY) form a helical membrane-spanning segment. Over 2434-3341 (RFMHIAARAL…SRYRRGNDVI (908 aa)) the chain is Cytoplasmic. Residues 2454–2706 (ALEKSTTIGL…SPVLPKGTRA (253 aa)) enclose the mRNA cap 0-1 NS5-type MT domain. Ser-2497 contributes to the S-adenosyl-L-methionine binding site. Lys-2509 acts as the For 2'-O-MTase activity in catalysis. Positions 2527, 2528, 2545, 2546, 2572, and 2573 each coordinate S-adenosyl-L-methionine. Asp-2587 (for 2'-O-MTase activity) is an active-site residue. Ile-2588 serves as a coordination point for S-adenosyl-L-methionine. Catalysis depends on for 2'-O-MTase activity residues Lys-2624 and Glu-2660. Residue Tyr-2662 coordinates S-adenosyl-L-methionine. Glu-2881, His-2885, Cys-2890, and Cys-2893 together coordinate Zn(2+). Residues 2970 to 3117 (KYLIADDIAG…STDNRDFSSA (148 aa)) form the RdRp catalytic domain. 3 residues coordinate Zn(2+): His-3152, Cys-3168, and Cys-3287.

The protein in the N-terminal section; belongs to the class I-like SAM-binding methyltransferase superfamily. mRNA cap 0-1 NS5-type methyltransferase family. As to quaternary structure, homodimer. In terms of assembly, forms heterodimers with envelope protein E in the endoplasmic reticulum and Golgi. Homodimer; in the endoplasmic reticulum and Golgi. As to quaternary structure, forms homodimers as well as homohexamers. NS1 may interact with NS4A. In terms of assembly, forms a heterodimer with serine protease NS3. May form homooligomers. Forms a heterodimer with NS2B. Interacts with NS4B. Interacts with unphosphorylated RNA-directed RNA polymerase NS5; this interaction stimulates RNA-directed RNA polymerase NS5 guanylyltransferase activity. As to quaternary structure, interacts with serine protease NS3. In terms of assembly, interacts with host STAT2; this interaction inhibits the phosphorylation of the latter, and, when all viral proteins are present (polyprotein), targets STAT2 for degradation. In terms of processing, genome polyprotein: Specific enzymatic cleavages in vivo yield mature proteins. Cleavages in the lumen of endoplasmic reticulum are performed by host signal peptidase, whereas cleavages in the cytoplasmic side are performed by serine protease NS3. Signal cleavage at the 2K-4B site requires a prior NS3 protease-mediated cleavage at the 4A-2K site. Post-translationally, cleaved in post-Golgi vesicles by a host furin, releasing the mature small envelope protein M, and peptide pr. This cleavage is incomplete as up to 30% of viral particles still carry uncleaved prM. N-glycosylated. In terms of processing, N-glycosylated. The excreted form is glycosylated and this is required for efficient secretion of the protein from infected cells. Post-translationally, phosphorylated on serines residues. This phosphorylation may trigger NS5 nuclear localization.

It localises to the virion. It is found in the host nucleus. The protein resides in the secreted. The protein localises to the virion membrane. Its subcellular location is the host endoplasmic reticulum membrane. It carries out the reaction Selective hydrolysis of -Xaa-Xaa-|-Yaa- bonds in which each of the Xaa can be either Arg or Lys and Yaa can be either Ser or Ala.. The catalysed reaction is RNA(n) + a ribonucleoside 5'-triphosphate = RNA(n+1) + diphosphate. It catalyses the reaction a ribonucleoside 5'-triphosphate + H2O = a ribonucleoside 5'-diphosphate + phosphate + H(+). The enzyme catalyses ATP + H2O = ADP + phosphate + H(+). It carries out the reaction a 5'-end (5'-triphosphoguanosine)-ribonucleoside in mRNA + S-adenosyl-L-methionine = a 5'-end (N(7)-methyl 5'-triphosphoguanosine)-ribonucleoside in mRNA + S-adenosyl-L-homocysteine. The catalysed reaction is a 5'-end (N(7)-methyl 5'-triphosphoguanosine)-ribonucleoside in mRNA + S-adenosyl-L-methionine = a 5'-end (N(7)-methyl 5'-triphosphoguanosine)-(2'-O-methyl-ribonucleoside) in mRNA + S-adenosyl-L-homocysteine + H(+). In terms of biological role, plays a role in virus budding by binding to the cell membrane and gathering the viral RNA into a nucleocapsid that forms the core of a mature virus particle. During virus entry, may induce genome penetration into the host cytoplasm after hemifusion induced by the surface proteins. Can migrate to the cell nucleus where it modulates host functions. Its function is as follows. Prevents premature fusion activity of envelope proteins in trans-Golgi by binding to envelope protein E at pH6.0. After virion release in extracellular space, gets dissociated from E dimers. Functionally, acts as a chaperone for envelope protein E during intracellular virion assembly by masking and inactivating envelope protein E fusion peptide. prM is the only viral peptide matured by host furin in the trans-Golgi network probably to avoid catastrophic activation of the viral fusion activity in acidic Golgi compartment prior to virion release. prM-E cleavage is inefficient, and many virions are only partially matured. These uncleaved prM would play a role in immune evasion. May play a role in virus budding. Exerts cytotoxic effects by activating a mitochondrial apoptotic pathway through M ectodomain. May display a viroporin activity. In terms of biological role, binds to host cell surface receptor and mediates fusion between viral and cellular membranes. Envelope protein is synthesized in the endoplasmic reticulum in the form of heterodimer with protein prM. They play a role in virion budding in the ER, and the newly formed immature particle is covered with 60 spikes composed of heterodimer between precursor prM and envelope protein E. The virion is transported to the Golgi apparatus where the low pH causes dissociation of PrM-E heterodimers and formation of E homodimers. prM-E cleavage is inefficient, and many virions are only partially matured. These uncleaved prM would play a role in immune evasion. Its function is as follows. Involved in immune evasion, pathogenesis and viral replication. Once cleaved off the polyprotein, is targeted to three destinations: the viral replication cycle, the plasma membrane and the extracellular compartment. May play a role in viral genome replication. Assist membrane bending and envelopment of genomic RNA at the endoplasmic reticulum. Excreted as a hexameric lipoparticle that plays a role against host immune response. Functionally, component of the viral RNA replication complex that functions in virion assembly and antagonizes the host immune response. Required cofactor for the serine protease function of NS3. May have membrane-destabilizing activity and form viroporins. In terms of biological role, displays three enzymatic activities: serine protease, NTPase and RNA helicase. NS3 serine protease, in association with NS2B, performs its autocleavage and cleaves the polyprotein at dibasic sites in the cytoplasm: C-prM, NS2A-NS2B, NS2B-NS3, NS3-NS4A, NS4A-2K and NS4B-NS5. NS3 RNA helicase binds RNA and unwinds dsRNA in the 3' to 5' direction. Its function is as follows. Regulates the ATPase activity of the NS3 helicase activity. NS4A allows NS3 helicase to conserve energy during unwinding. Functionally, functions as a signal peptide for NS4B and is required for the interferon antagonism activity of the latter. Inhibits interferon (IFN)-induced host STAT1 phosphorylation and nuclear translocation, thereby preventing the establishment of a cellular antiviral state by blocking the IFN-alpha/beta pathway. In terms of biological role, replicates the viral (+) and (-) RNA genome, and performs the capping of genomes in the cytoplasm. NS5 methylates viral RNA cap at guanine N-7 and ribose 2'-O positions. Besides its role in RNA genome replication, also prevents the establishment of cellular antiviral state by blocking the interferon-alpha/beta (IFN-alpha/beta) signaling pathway. Inhibits host TYK2 and STAT2 phosphorylation, thereby preventing activation of JAK-STAT signaling pathway. In Aedes (CFA flavivirus), this protein is Genome polyprotein.